The chain runs to 336 residues: P2Y purinoceptor 13 (336 aa).

Residues M1–V32 are Extracellular-facing. N6 and N14 each carry an N-linked (GlcNAc...) asparagine glycan. A helical membrane pass occupies residues L33–I53. Over H54–T60 the chain is Cytoplasmic. Residues F61 to F81 traverse the membrane as a helical segment. Residues K82–T100 lie on the Extracellular side of the membrane. An intrachain disulfide couples C99 to C176. Residues F101–A121 form a helical membrane-spanning segment. The Cytoplasmic segment spans residues F122 to K144. Residues I145–N165 form a helical membrane-spanning segment. Residues K166–H193 are Extracellular-facing. Residues T194–A214 traverse the membrane as a helical segment. Residues K215–K237 lie on the Cytoplasmic side of the membrane. Residues V238–P258 form a helical membrane-spanning segment. At Y259 to E281 the chain is on the extracellular side. N-linked (GlcNAc...) asparagine glycosylation occurs at N266. The chain crosses the membrane as a helical span at residues S282 to C302. At K303–S336 the chain is on the cytoplasmic side.

It belongs to the G-protein coupled receptor 1 family. As to expression, highest levels in spleen, liver brain and kidney. Lower but significant level are also detected in intestine, stomach, skeletal muscle, testis, heart and lung.

It localises to the cell membrane. Receptor for ADP. Coupled to G(i)-proteins. May play a role in hematopoiesis and the immune system. This chain is P2Y purinoceptor 13 (P2ry13), found in Rattus norvegicus (Rat).